The chain runs to 396 residues: Phosphoglycerate kinase (396 aa).

Substrate contacts are provided by residues 21 to 23 (DFN), arginine 36, 59 to 62 (HLGR), arginine 118, and arginine 151. Residues lysine 201, glycine 292, glutamate 323, and 349 to 352 (GGDS) contribute to the ATP site.

This sequence belongs to the phosphoglycerate kinase family. As to quaternary structure, monomer.

The protein localises to the cytoplasm. It catalyses the reaction (2R)-3-phosphoglycerate + ATP = (2R)-3-phospho-glyceroyl phosphate + ADP. Its pathway is carbohydrate degradation; glycolysis; pyruvate from D-glyceraldehyde 3-phosphate: step 2/5. The polypeptide is Phosphoglycerate kinase (Leptospira interrogans serogroup Icterohaemorrhagiae serovar copenhageni (strain Fiocruz L1-130)).